The chain runs to 250 residues: 3-deoxy-manno-octulosonate cytidylyltransferase (250 aa).

This sequence belongs to the KdsB family.

It is found in the cytoplasm. It catalyses the reaction 3-deoxy-alpha-D-manno-oct-2-ulosonate + CTP = CMP-3-deoxy-beta-D-manno-octulosonate + diphosphate. It functions in the pathway nucleotide-sugar biosynthesis; CMP-3-deoxy-D-manno-octulosonate biosynthesis; CMP-3-deoxy-D-manno-octulosonate from 3-deoxy-D-manno-octulosonate and CTP: step 1/1. It participates in bacterial outer membrane biogenesis; lipopolysaccharide biosynthesis. In terms of biological role, activates KDO (a required 8-carbon sugar) for incorporation into bacterial lipopolysaccharide in Gram-negative bacteria. The polypeptide is 3-deoxy-manno-octulosonate cytidylyltransferase (Thioalkalivibrio sulfidiphilus (strain HL-EbGR7)).